The sequence spans 242 residues: ATP synthase subunit a, chloroplastic (242 aa).

5 helical membrane-spanning segments follow: residues 34–54 (GQVL…AVLG), 93–113 (VPFI…GAII), 132–152 (INTT…AGLS), 188–210 (LFGN…PLVI), and 222–242 (GSVQ…EALE).

It belongs to the ATPase A chain family. F-type ATPases have 2 components, CF(1) - the catalytic core - and CF(0) - the membrane proton channel. CF(1) has five subunits: alpha(3), beta(3), gamma(1), delta(1), epsilon(1). CF(0) has four main subunits: a, b, b' and c.

The protein resides in the plastid. The protein localises to the chloroplast thylakoid membrane. Functionally, key component of the proton channel; it plays a direct role in the translocation of protons across the membrane. In Trieres chinensis (Marine centric diatom), this protein is ATP synthase subunit a, chloroplastic.